An 885-amino-acid polypeptide reads, in one-letter code: Dual serine/threonine and tyrosine protein kinase (885 aa).

The region spanning 614–868 is the Protein kinase domain; the sequence is PKLGRELGRG…PLLGIVQPGL (255 aa). ATP is bound by residues 620-628 and Lys643; that span reads LGRGQYGVV. Asp739 (proton acceptor) is an active-site residue.

The protein belongs to the protein kinase superfamily. Ser/Thr protein kinase family.

It localises to the cytoplasm. The protein resides in the cell membrane. The protein localises to the apical cell membrane. Its subcellular location is the basolateral cell membrane. It is found in the cell junction. It catalyses the reaction L-seryl-[protein] + ATP = O-phospho-L-seryl-[protein] + ADP + H(+). It carries out the reaction L-threonyl-[protein] + ATP = O-phospho-L-threonyl-[protein] + ADP + H(+). The enzyme catalyses L-tyrosyl-[protein] + ATP = O-phospho-L-tyrosyl-[protein] + ADP + H(+). Its function is as follows. May act as a positive regulator of ERK phosphorylation downstream of fibroblast growth factor-receptor activation. May induce both caspase-dependent apoptosis and caspase-independent cell death. Plays a role in the embryonic development. This chain is Dual serine/threonine and tyrosine protein kinase (dstyk), found in Danio rerio (Zebrafish).